The primary structure comprises 430 residues: Adenylosuccinate synthetase (430 aa).

GTP is bound by residues 12–18 (GDEGKGK) and 40–42 (GHT). The active-site Proton acceptor is the aspartate 13. 2 residues coordinate Mg(2+): aspartate 13 and glycine 40. IMP is bound by residues 13-16 (DEGK), 38-41 (NAGH), threonine 130, arginine 144, glutamine 224, threonine 239, and arginine 303. Histidine 41 functions as the Proton donor in the catalytic mechanism. 299–305 (TVTGRKR) is a substrate binding site. GTP contacts are provided by residues arginine 305, 331–333 (KLD), and 413–415 (STS).

The protein belongs to the adenylosuccinate synthetase family. As to quaternary structure, homodimer. The cofactor is Mg(2+).

The protein resides in the cytoplasm. The enzyme catalyses IMP + L-aspartate + GTP = N(6)-(1,2-dicarboxyethyl)-AMP + GDP + phosphate + 2 H(+). The protein operates within purine metabolism; AMP biosynthesis via de novo pathway; AMP from IMP: step 1/2. Its function is as follows. Plays an important role in the de novo pathway of purine nucleotide biosynthesis. Catalyzes the first committed step in the biosynthesis of AMP from IMP. The sequence is that of Adenylosuccinate synthetase from Cereibacter sphaeroides (strain ATCC 17025 / ATH 2.4.3) (Rhodobacter sphaeroides).